The primary structure comprises 1225 residues: Catenin delta-2 (1225 aa).

Disordered regions lie at residues 1–51 (MFAR…TSAI), 87–117 (SETGSMSSMSSAEEQFQWQSQDGQKDIEDEL), 134–242 (SGIL…HLPD), and 256–312 (SSTL…KSYS). 2 stretches are compositionally biased toward polar residues: residues 20 to 51 (QPSSASEKTSSLSPGLNTSNGDGSETETTSAI) and 98 to 108 (AEEQFQWQSQD). The stretch at 49–84 (SAILASVKEQELQFERLTRELEAERQIVASQLERCK) forms a coiled coil. Residues 149–160 (SLLSQSALQLNS) show a composition bias toward low complexity. Composition is skewed to polar residues over residues 172–187 (YHSNQTLALGETTPSQ) and 195–209 (ARATGQSFSQGTTSR). Arg209 is subject to Omega-N-methylarginine. Residues 217–229 (EPAPPPPPPPREP) show a composition bias toward pro residues. Omega-N-methylarginine is present on Arg264. Ser267 and Ser276 each carry phosphoserine. An omega-N-methylarginine mark is found at Arg282 and Arg296. A compositionally biased stretch (polar residues) spans 299–312 (SPKQSPSRLAKSYS). Phosphoserine is present on residues Ser327, Ser360, Ser415, and Ser461. One copy of the ARM 1 repeat lies at 394 to 438 (GSRASYSSQHGHLGPELRALQSPEHHIDPIYEDRVYQKPPMRSLS). 2 disordered regions span residues 432-483 (PPMR…NAAA) and 514-542 (SPYSKSGPALPPEGTLARSPSIDSIQKDP). Residues 469–478 (LQRTGSQHGP) show a composition bias toward polar residues. Phosphoserine is present on Ser514. Tyr516 carries the post-translational modification Phosphotyrosine. 8 ARM repeats span residues 540–579 (KDPREFGWRDPELPEVIQMLQHQFPSVQSNAAAYLQHLCF), 582–621 (NKIKAEIRRQGGIQLLVDLLDHRMTEVHRSACGALRNLVY), 626–666 (DDNK…NLSS), 682–724 (LTNA…NVSS), 728–773 (EARR…NLSY), 835–875 (PKGI…NLAA), 882–921 (VYIRAAVRKEKGLPILVELLRIDNDRVVCAVATALRNMAL), and 975–1018 (MENA…SMWQ). Positions 1042-1077 (TIERDRQRPYSSSRTPSISPVRVSPNNRSASAPASP) are disordered. The segment covering 1050–1059 (PYSSSRTPSI) has biased composition (polar residues). Ser1065 and Ser1076 each carry phosphoserine. Positions 1065 to 1077 (SPNNRSASAPASP) are enriched in low complexity.

Belongs to the beta-catenin family. Binds to E-cadherin at a juxtamembrane site within the cytoplasmic domain. Interacts with PDZD2. Interacts with ZBTB33. Binds to PSEN1. Interacts with ARHGEF28. Interacts (via the extreme C-terminus) with FRMPD2 (via the PDZ 2 domain). Interacts with CDK5. Interacts with CTNNB1. Interacts with GSK3A and GSK3B. Interacts with DNM2. Interacts with CCDC85B. In terms of processing, O-glycosylated. Phosphorylated by CDK5. Phosphorylated by GSK3B. As to expression, expressed in brain; highest expression is observed in fetal brain.

It localises to the nucleus. The protein localises to the cell junction. The protein resides in the adherens junction. It is found in the cell projection. Its subcellular location is the dendrite. It localises to the perikaryon. Functionally, has a critical role in neuronal development, particularly in the formation and/or maintenance of dendritic spines and synapses. Involved in the regulation of Wnt signaling. It probably acts on beta-catenin turnover, facilitating beta-catenin interaction with GSK3B, phosphorylation, ubiquitination and degradation. Functions as a transcriptional activator when bound to ZBTB33. May be involved in neuronal cell adhesion and tissue morphogenesis and integrity by regulating adhesion molecules. This is Catenin delta-2 (CTNND2) from Homo sapiens (Human).